The following is a 732-amino-acid chain: Elongation factor 2 (732 aa).

The 242-residue stretch at 19 to 260 folds into the tr-type G domain; it reads ERIRNIDIAA…MVIKNLPNPR (242 aa). GTP is bound by residues 28–35, 94–98, and 148–151; these read AHIDHGKT, DTPGH, and NKVD. Position 598 is a diphthamide (His-598).

This sequence belongs to the TRAFAC class translation factor GTPase superfamily. Classic translation factor GTPase family. EF-G/EF-2 subfamily.

The protein resides in the cytoplasm. Functionally, catalyzes the GTP-dependent ribosomal translocation step during translation elongation. During this step, the ribosome changes from the pre-translocational (PRE) to the post-translocational (POST) state as the newly formed A-site-bound peptidyl-tRNA and P-site-bound deacylated tRNA move to the P and E sites, respectively. Catalyzes the coordinated movement of the two tRNA molecules, the mRNA and conformational changes in the ribosome. The sequence is that of Elongation factor 2 from Picrophilus torridus (strain ATCC 700027 / DSM 9790 / JCM 10055 / NBRC 100828 / KAW 2/3).